A 486-amino-acid polypeptide reads, in one-letter code: Putative ankyrin repeat protein R634 (486 aa).

ANK repeat units follow at residues 84 to 113 (DLFK…NVRE), 114 to 143 (HNDV…DLYA), 145 to 173 (KNTL…NFRE), 174 to 203 (NCDT…DVNS), 205 to 233 (SHKS…NIDW), 234 to 263 (RHNY…NLEI), 265 to 293 (DGCI…EIGF), 307 to 336 (NKIT…ATIK), 337 to 366 (EKNY…SLEK), 367 to 396 (KINK…NVKT), 398 to 426 (EGLP…DVTS), and 427 to 456 (YDNY…NVND).

The chain is Putative ankyrin repeat protein R634 from Acanthamoeba polyphaga (Amoeba).